The primary structure comprises 375 residues: Probable RNA 3'-terminal phosphate cyclase-like protein (375 aa).

Belongs to the RNA 3'-terminal cyclase family. Type 2 subfamily.

It localises to the nucleus. The protein localises to the nucleolus. Functionally, does not have cyclase activity. Plays a role in 40S-ribosomal-subunit biogenesis in the early pre-rRNA processing steps at sites A0, A1 and A2 that are required for proper maturation of the 18S RNA. This is Probable RNA 3'-terminal phosphate cyclase-like protein from Arabidopsis thaliana (Mouse-ear cress).